Here is a 246-residue protein sequence, read N- to C-terminus: Transcription factor A, mitochondrial (246 aa).

Residues 1–42 (MALLRGVWGVLSALGKSGADLCAVCGSRLRSPFSFAYVPRWF) constitute a mitochondrion transit peptide. Positions 50 to 118 (PKKPMTSYVR…VYKEEVNRIQ (69 aa)) form a DNA-binding region, HMG box 1. Ser-56 and Ser-61 each carry phosphoserine; by PKA. Residue Thr-122 is modified to Phosphothreonine. Residues 155–219 (PKRPRSAYNI…RYYNEMKSWE (65 aa)) constitute a DNA-binding region (HMG box 2). The residue at position 160 (Ser-160) is a Phosphoserine; by PKA. Residues Ser-193 and Ser-195 each carry the phosphoserine modification.

As to quaternary structure, monomer; binds DNA as a monomer. Homodimer. Component of the mitochondrial transcription initiation complex, composed at least of TFB2M, TFAM and POLRMT. In this complex TFAM recruits POLRMT to the promoter whereas TFB2M induces structural changes in POLRMT to enable promoter opening and trapping of the DNA non-template strand. Upon metabolic stress, forms a complex composed of FOXO3, SIRT3, TFAM and POLRMT. Interacts with TFB1M and TFB2M. Interacts with CLPX; this enhances DNA-binding. Phosphorylation by PKA within the HMG box 1 impairs DNA binding and promotes degradation by the AAA+ Lon protease.

The protein resides in the mitochondrion. It is found in the mitochondrion matrix. It localises to the mitochondrion nucleoid. In terms of biological role, binds to the mitochondrial light strand promoter and functions in mitochondrial transcription regulation. Component of the mitochondrial transcription initiation complex, composed at least of TFB2M, TFAM and POLRMT that is required for basal transcription of mitochondrial DNA. In this complex, TFAM recruits POLRMT to a specific promoter whereas TFB2M induces structural changes in POLRMT to enable promoter opening and trapping of the DNA non-template strand. Required for accurate and efficient promoter recognition by the mitochondrial RNA polymerase. Promotes transcription initiation from the HSP1 and the light strand promoter by binding immediately upstream of transcriptional start sites. Is able to unwind DNA. Bends the mitochondrial light strand promoter DNA into a U-turn shape via its HMG boxes. Required for maintenance of normal levels of mitochondrial DNA. May play a role in organizing and compacting mitochondrial DNA. The protein is Transcription factor A, mitochondrial of Sus scrofa (Pig).